The following is a 969-amino-acid chain: GATOR2 complex protein Wdr59 (969 aa).

The tract at residues 1–24 (MPPTETLRPGERGTAGGPGAGAPE) is disordered. WD repeat units lie at residues 127 to 167 (GHTR…KPAL), 172 to 211 (VCMSGATQVGFNRVSGNLLAAAHDGDLRIWDIRKGSCPTH), 215 to 255 (AHLN…RAEK), 258 to 303 (TTMS…DPIC), and 307 to 351 (GHTD…LKLC). T373 is modified (phosphothreonine). In terms of domain architecture, RWD spans 435–538 (HEFSLLNTNM…RALVAAMKKK (104 aa)). The C4-type zinc-finger motif lies at 891-911 (ECRKCAKPKRTPKCEPCKRPV). Residues C892, C895, C904, C907, C917, C928, H933, H936, H939, C950, C953, C955, and C957 each contribute to the Zn(2+) site. Residues 912-960 (LFCVLCRLPVKGAANACLACGHGGHIDHMMQWFEKHNVCATCGCKCLER) form an RING-type; atypical zinc finger.

This sequence belongs to the WD repeat WDR59 family. In terms of assembly, component of the GATOR complex consisting of mio, Nup44A/Seh1, Im11, Nplr3, Nplr2, Wdr24, Wdr59 and Sec13. Within the GATOR complex, probable component of the GATOR2 subcomplex which is likely composed of mio, Nup44A/Seh1, Wdr24, Wdr59 and Sec13. The GATOR2 complex associates with unmet in the absence of S-adenosyl-L-methionine; the mio-Wdr24-Nup44A subcomplex is essential and sufficient for this interaction while Wdr59 and Sec13 are dispensable. This association acts as a nutrient sensor to inhibit mTORC1 signaling in the absence of methionine.

The protein localises to the lysosome membrane. A component of the GATOR complex, which functions as a regulator of the amino acid-sensing branch of the mTORC1 signaling pathway. The two GATOR subcomplexes, GATOR1 and GATOR2, regulate the mTORC1 pathway in order to mediate metabolic homeostasis, female gametogenesis and the response to amino acid limitation and complete starvation. GATOR2 activates the mTORC1 signaling pathway through the inhibition of the GATOR1 subcomplex, controlling the switch to cell proliferation and growth under nutrient replete conditions and during female oocyte development. Acts as an atypical component of the GATOR2 subcomplex, which can either promote or inhibit mTORC1 signaling, depending on tissues: inhibits mTORC1 activity by preventing the activity of GATOR2 in the ovary and the eye imaginal disk brain, while it promotes mTORC1 activity in the fat body. The polypeptide is GATOR2 complex protein Wdr59 (Drosophila melanogaster (Fruit fly)).